A 250-amino-acid chain; its full sequence is 3-deoxy-manno-octulosonate cytidylyltransferase (250 aa).

Belongs to the KdsB family.

The protein localises to the cytoplasm. It catalyses the reaction 3-deoxy-alpha-D-manno-oct-2-ulosonate + CTP = CMP-3-deoxy-beta-D-manno-octulosonate + diphosphate. It functions in the pathway nucleotide-sugar biosynthesis; CMP-3-deoxy-D-manno-octulosonate biosynthesis; CMP-3-deoxy-D-manno-octulosonate from 3-deoxy-D-manno-octulosonate and CTP: step 1/1. The protein operates within bacterial outer membrane biogenesis; lipopolysaccharide biosynthesis. In terms of biological role, activates KDO (a required 8-carbon sugar) for incorporation into bacterial lipopolysaccharide in Gram-negative bacteria. This Syntrophobacter fumaroxidans (strain DSM 10017 / MPOB) protein is 3-deoxy-manno-octulosonate cytidylyltransferase.